The following is a 79-amino-acid chain: ATP synthase subunit c (79 aa).

A run of 2 helical transmembrane segments spans residues 11-31 and 53-73; these read MAAA…IGIL and FFIV…LGLY.

Belongs to the ATPase C chain family. As to quaternary structure, F-type ATPases have 2 components, F(1) - the catalytic core - and F(0) - the membrane proton channel. F(1) has five subunits: alpha(3), beta(3), gamma(1), delta(1), epsilon(1). F(0) has three main subunits: a(1), b(2) and c(10-14). The alpha and beta chains form an alternating ring which encloses part of the gamma chain. F(1) is attached to F(0) by a central stalk formed by the gamma and epsilon chains, while a peripheral stalk is formed by the delta and b chains.

Its subcellular location is the cell inner membrane. F(1)F(0) ATP synthase produces ATP from ADP in the presence of a proton or sodium gradient. F-type ATPases consist of two structural domains, F(1) containing the extramembraneous catalytic core and F(0) containing the membrane proton channel, linked together by a central stalk and a peripheral stalk. During catalysis, ATP synthesis in the catalytic domain of F(1) is coupled via a rotary mechanism of the central stalk subunits to proton translocation. In terms of biological role, key component of the F(0) channel; it plays a direct role in translocation across the membrane. A homomeric c-ring of between 10-14 subunits forms the central stalk rotor element with the F(1) delta and epsilon subunits. This is ATP synthase subunit c from Serratia proteamaculans (strain 568).